The chain runs to 284 residues: Tryptophan synthase alpha chain (284 aa).

Residues Glu-59 and Asp-70 each act as proton acceptor in the active site.

Belongs to the TrpA family. As to quaternary structure, tetramer of two alpha and two beta chains.

It carries out the reaction (1S,2R)-1-C-(indol-3-yl)glycerol 3-phosphate + L-serine = D-glyceraldehyde 3-phosphate + L-tryptophan + H2O. It participates in amino-acid biosynthesis; L-tryptophan biosynthesis; L-tryptophan from chorismate: step 5/5. Its function is as follows. The alpha subunit is responsible for the aldol cleavage of indoleglycerol phosphate to indole and glyceraldehyde 3-phosphate. This Azospirillum brasilense protein is Tryptophan synthase alpha chain.